The sequence spans 271 residues: Signal recognition particle receptor subunit beta (271 aa).

Residues 37 to 57 (LLSVVVAVLAVLLTLVFWKLI) form a helical membrane-spanning segment. GTP is bound by residues 71–79 (GLCDSGKTL) and 92–95 (TQTS). At Ser112 the chain carries Phosphoserine. Gly120 provides a ligand contact to GTP. At Thr214 the chain carries Phosphothreonine. Residue Ala248 coordinates GTP.

This sequence belongs to the SRP receptor beta subunit family. In terms of assembly, heterodimer with SRPRA.

The protein localises to the endoplasmic reticulum membrane. In terms of biological role, component of the signal recognition particle (SRP) complex receptor (SR). Ensures, in conjunction with the SRP complex, the correct targeting of the nascent secretory proteins to the endoplasmic reticulum membrane system. May mediate the membrane association of SR. This Homo sapiens (Human) protein is Signal recognition particle receptor subunit beta (SRPRB).